The chain runs to 190 residues: Dual-action ribosomal maturation protein DarP (190 aa).

Residues 1–31 are disordered; that stretch reads MIHADHDDNLPDDEEGLPLPPSKSQRKRDMH.

It belongs to the DarP family.

It localises to the cytoplasm. Functionally, member of a network of 50S ribosomal subunit biogenesis factors which assembles along the 30S-50S interface, preventing incorrect 23S rRNA structures from forming. Promotes peptidyl transferase center (PTC) maturation. The chain is Dual-action ribosomal maturation protein DarP from Aromatoleum aromaticum (strain DSM 19018 / LMG 30748 / EbN1) (Azoarcus sp. (strain EbN1)).